A 2729-amino-acid polypeptide reads, in one-letter code: Protein NO VEIN (2729 aa).

The segment at 1–27 is disordered; it reads MQGNHDGSWSLHPSTNNGSGRANGNIN. 2 short sequence motifs (nuclear localization signal) span residues 194-201 and 473-480; these read KRKVDVLR and MKRLGGSN. 2 disordered regions span residues 477–517 and 2482–2515; these read GGSN…IPKL and LPSS…DVTE. Basic and acidic residues-rich tracts occupy residues 488-497 and 2496-2515; these read RNHEKSDSSK and NTDD…DVTE.

As to expression, specifically expressed in developing embryos, leaf primordia, and shoot and root apical meristems.

Its subcellular location is the nucleus. In terms of biological role, essential protein required for cell fate determination during embryogenesis. Mediates auxin-dependent coordinated cell-fate specification and patterning in embryos (e.g. cotyledon outgrowth and separation), shoots and roots (e.g. leaf vascular development, cellular patterning and stem cell maintenance in the meristems). Required for provascular PIN1 expression and region-specific expression of PIN7 in leaf primordia, cell type-specific expression of PIN3, PIN4, and PIN7 in the root, and PIN2 polarity in the root cortex. The polypeptide is Protein NO VEIN (Arabidopsis thaliana (Mouse-ear cress)).